The following is a 307-amino-acid chain: Oxygen-dependent coproporphyrinogen-III oxidase (307 aa).

S99 lines the substrate pocket. A divalent metal cation is bound by residues H103 and H113. Catalysis depends on H113, which acts as the Proton donor. N115–R117 is a binding site for substrate. Residues H152 and H182 each coordinate a divalent metal cation. The segment at Y247–R282 is important for dimerization. G265–R267 is a binding site for substrate.

This sequence belongs to the aerobic coproporphyrinogen-III oxidase family. Homodimer. A divalent metal cation is required as a cofactor.

It is found in the cytoplasm. It carries out the reaction coproporphyrinogen III + O2 + 2 H(+) = protoporphyrinogen IX + 2 CO2 + 2 H2O. It participates in porphyrin-containing compound metabolism; protoporphyrin-IX biosynthesis; protoporphyrinogen-IX from coproporphyrinogen-III (O2 route): step 1/1. In terms of biological role, involved in the heme biosynthesis. Catalyzes the aerobic oxidative decarboxylation of propionate groups of rings A and B of coproporphyrinogen-III to yield the vinyl groups in protoporphyrinogen-IX. The protein is Oxygen-dependent coproporphyrinogen-III oxidase of Burkholderia mallei (strain SAVP1).